The chain runs to 331 residues: UPF0194 membrane protein YbhG (331 aa).

A signal peptide spans 1–19; that stretch reads MKKPVVIGLAIAAIVTVIA. Positions 107–208 form a coiled coil; the sequence is EEIAQAAAAV…LDLQDTTLIA (102 aa).

Belongs to the UPF0194 family.

It is found in the periplasm. The polypeptide is UPF0194 membrane protein YbhG (Salmonella arizonae (strain ATCC BAA-731 / CDC346-86 / RSK2980)).